A 685-amino-acid chain; its full sequence is E3 ubiquitin-protein ligase RNF103 (685 aa).

The next 4 membrane-spanning stretches (helical) occupy residues 6-26 (FFLL…EAIV), 326-346 (LFVL…FITQ), 366-386 (LLII…LDSF), and 411-431 (MFYS…GLLI). The span at 526-543 (EEMSEGSQDTENDSESEN) shows a compositional bias: acidic residues. A disordered region spans residues 526–550 (EEMSEGSQDTENDSESENTDTLSSE). The RING-type zinc finger occupies 621–663 (CVVCLENFENGCLLMGLPCGHVFHQNCIVMWLAGGRHCCPVCR).

Interacts with DERL1 and VCP. In terms of tissue distribution, highly expressed in the normal cerebellum but not in the cerebral cortex.

The protein resides in the endoplasmic reticulum membrane. It carries out the reaction S-ubiquitinyl-[E2 ubiquitin-conjugating enzyme]-L-cysteine + [acceptor protein]-L-lysine = [E2 ubiquitin-conjugating enzyme]-L-cysteine + N(6)-ubiquitinyl-[acceptor protein]-L-lysine.. It participates in protein modification; protein ubiquitination. Functionally, acts as an E2-dependent E3 ubiquitin-protein ligase, probably involved in the ER-associated protein degradation pathway. In Homo sapiens (Human), this protein is E3 ubiquitin-protein ligase RNF103 (RNF103).